We begin with the raw amino-acid sequence, 314 residues long: Deoxyribonuclease-1-like 1 (314 aa).

Positions 1 to 37 (MPFGQPGFLWRVPDAHIAMRGLVMAPLLILLVGGTEA) are cleaved as a signal peptide. Residue asparagine 102 is glycosylated (N-linked (GlcNAc...) asparagine). The active site involves glutamate 113. N-linked (GlcNAc...) asparagine glycosylation occurs at asparagine 133. Histidine 164 is an active-site residue. Cysteine 203 and cysteine 240 form a disulfide bridge. Residue asparagine 239 is glycosylated (N-linked (GlcNAc...) asparagine).

The protein belongs to the DNase I family. In terms of tissue distribution, highly expressed in heart and skeletal muscles. Low expression in brain and thymus. Intermediated expression in other tissues.

It is found in the endoplasmic reticulum. This chain is Deoxyribonuclease-1-like 1 (Dnase1l1), found in Mus musculus (Mouse).